The chain runs to 152 residues: UPF0179 protein HQ_3004A (152 aa).

The protein belongs to the UPF0179 family.

The protein is UPF0179 protein HQ_3004A of Haloquadratum walsbyi (strain DSM 16790 / HBSQ001).